A 468-amino-acid chain; its full sequence is MSSGKIAQVIGPVVDVLFAAGEKLPEINNALVVYKNDERKTKIVLEVALELGDGMVRTIAMESTDGLTRGMEVLDTGRPISVPVGKETLGRVFNVLGDTIDLEAPFTEDAERQPIHKKAPTFDELSTSSEILETGIKVIDLLAPYLKGGKVGLFGGAGVGKTVLIQELIHNIAQEHGGISVFTGVGERTREGNDLYWEMKESGVIEKTAMVFGQMNEPPGARMRVALTGLTIAEYFRDVEGQDVLLFIDNIFRFTQAGSEVSALLGRMPSAVGYQPTLATEMGQLQERITSTKKGSVTSIQAIYVPADDYTDPAPATAFAHLDSTTNLERKLVQLGIYPAVDPLASSSRALAPEIVGEEHYAVAAEVKRVLQRYHELQDIIAILGMDELSDEEKTLVARARRIQFFLSQNFNVAEQFTGQPGSYVPVAETVRGFKEILDGKYDHLPEDAFRGVGSIEDVIAKAEKMGF.

155-162 serves as a coordination point for ATP; it reads GGAGVGKT.

This sequence belongs to the ATPase alpha/beta chains family. As to quaternary structure, F-type ATPases have 2 components, CF(1) - the catalytic core - and CF(0) - the membrane proton channel. CF(1) has five subunits: alpha(3), beta(3), gamma(1), delta(1), epsilon(1). CF(0) has three main subunits: a(1), b(2) and c(9-12). The alpha and beta chains form an alternating ring which encloses part of the gamma chain. CF(1) is attached to CF(0) by a central stalk formed by the gamma and epsilon chains, while a peripheral stalk is formed by the delta and b chains.

The protein resides in the cell membrane. It carries out the reaction ATP + H2O + 4 H(+)(in) = ADP + phosphate + 5 H(+)(out). Produces ATP from ADP in the presence of a proton gradient across the membrane. The catalytic sites are hosted primarily by the beta subunits. The polypeptide is ATP synthase subunit beta (Streptococcus pneumoniae (strain CGSP14)).